The chain runs to 135 residues: 2-iminobutanoate/2-iminopropanoate deaminase (135 aa).

S2 carries the post-translational modification N-acetylserine. Residues K13, K60, K67, and K134 each carry the N6-succinyllysine modification.

This sequence belongs to the RutC family. As to quaternary structure, homotrimer. Interacts with YTHDF2. Expressed predominantly in liver and kidney. Lower levels in lung and brain.

The protein resides in the cytoplasm. It localises to the nucleus. The protein localises to the peroxisome. It is found in the mitochondrion. The enzyme catalyses 2-iminobutanoate + H2O = 2-oxobutanoate + NH4(+). The catalysed reaction is 2-iminopropanoate + H2O = pyruvate + NH4(+). Its function is as follows. Catalyzes the hydrolytic deamination of enamine/imine intermediates that form during the course of normal metabolism. May facilitate the release of ammonia from these potentially toxic reactive metabolites, reducing their impact on cellular components. It may act on enamine/imine intermediates formed by several types of pyridoxal-5'-phosphate-dependent dehydratases including L-threonine dehydratase. Also promotes endoribonucleolytic cleavage of some transcripts by promoting recruitment of the ribonuclease P/MRP complex. Acts by bridging YTHDF2 and the ribonuclease P/MRP complex. RIDA/HRSP12 binds to N6-methyladenosine (m6A)-containing mRNAs containing a 5'-GGUUC-3' motif: cooperative binding of RIDA/HRSP12 and YTHDF2 to such transcripts lead to recruitment of the ribonuclease P/MRP complex and subsequent endoribonucleolytic cleavage. This Mus musculus (Mouse) protein is 2-iminobutanoate/2-iminopropanoate deaminase.